A 61-amino-acid chain; its full sequence is Beta-defensin 133 (61 aa).

The signal sequence occupies residues 1–23; it reads MKIHVFLFVLFFFLVPIATRVKC. Disulfide bonds link cysteine 31–cysteine 59 and cysteine 38–cysteine 52.

The protein belongs to the beta-defensin family.

It localises to the secreted. Has antibacterial activity. The sequence is that of Beta-defensin 133 (DEFB133) from Homo sapiens (Human).